Here is a 567-residue protein sequence, read N- to C-terminus: DNA ligase (567 aa).

Residue Glu260 participates in ATP binding. The N6-AMP-lysine intermediate role is filled by Lys262. ATP contacts are provided by Arg267, Arg282, Glu312, Phe352, Arg427, and Lys433.

The protein belongs to the ATP-dependent DNA ligase family. Mg(2+) is required as a cofactor.

The catalysed reaction is ATP + (deoxyribonucleotide)n-3'-hydroxyl + 5'-phospho-(deoxyribonucleotide)m = (deoxyribonucleotide)n+m + AMP + diphosphate.. In terms of biological role, DNA ligase that seals nicks in double-stranded DNA during DNA replication, DNA recombination and DNA repair. The polypeptide is DNA ligase (Methanococcoides burtonii (strain DSM 6242 / NBRC 107633 / OCM 468 / ACE-M)).